Here is a 63-residue protein sequence, read N- to C-terminus: DNA-directed RNA polymerase subunit omega (63 aa).

Belongs to the RNA polymerase subunit omega family. The RNAP catalytic core consists of 2 alpha, 1 beta, 1 beta' and 1 omega subunit. When a sigma factor is associated with the core the holoenzyme is formed, which can initiate transcription.

The catalysed reaction is RNA(n) + a ribonucleoside 5'-triphosphate = RNA(n+1) + diphosphate. Functionally, promotes RNA polymerase assembly. Latches the N- and C-terminal regions of the beta' subunit thereby facilitating its interaction with the beta and alpha subunits. This chain is DNA-directed RNA polymerase subunit omega, found in Blochmanniella pennsylvanica (strain BPEN).